A 568-amino-acid polypeptide reads, in one-letter code: Sulfite reductase [NADPH] hemoprotein beta-component (568 aa).

The [4Fe-4S] cluster site is built by Cys425, Cys431, Cys470, and Cys474. A siroheme-binding site is contributed by Cys474.

This sequence belongs to the nitrite and sulfite reductase 4Fe-4S domain family. Alpha(8)-beta(8). The alpha component is a flavoprotein, the beta component is a hemoprotein. It depends on siroheme as a cofactor. [4Fe-4S] cluster is required as a cofactor.

The enzyme catalyses hydrogen sulfide + 3 NADP(+) + 3 H2O = sulfite + 3 NADPH + 4 H(+). It participates in sulfur metabolism; hydrogen sulfide biosynthesis; hydrogen sulfide from sulfite (NADPH route): step 1/1. Functionally, component of the sulfite reductase complex that catalyzes the 6-electron reduction of sulfite to sulfide. This is one of several activities required for the biosynthesis of L-cysteine from sulfate. In Xanthomonas campestris pv. campestris (strain B100), this protein is Sulfite reductase [NADPH] hemoprotein beta-component.